A 500-amino-acid polypeptide reads, in one-letter code: ADP,ATP carrier protein 5 (500 aa).

11 helical membrane passes run 26–46 (LGKF…QNIL), 62–82 (IAGF…VIIY), 94–114 (IFYY…FVIY), 149–169 (YIVY…LLFW), 184–204 (FYTL…FLMM), 224–244 (ITLV…CCLL), 287–307 (LWLL…VEAV), 328–348 (LYIL…NNVM), 357–377 (AVIS…LIVF), 381–401 (ILSL…VSIG), and 469–489 (SISP…IYAV).

Belongs to the ADP/ATP translocase tlc family.

Its subcellular location is the cell membrane. Its function is as follows. Provides the rickettsial cell with host ATP in exchange for rickettsial ADP. This is an obligate exchange system. This energy acquiring activity is an important component of rickettsial parasitism. This Rickettsia typhi (strain ATCC VR-144 / Wilmington) protein is ADP,ATP carrier protein 5 (tlcE).